We begin with the raw amino-acid sequence, 516 residues long: GMP synthase [glutamine-hydrolyzing] (516 aa).

Positions Lys10 to Asn201 constitute a Glutamine amidotransferase type-1 domain. Cys87 serves as the catalytic Nucleophile. Active-site residues include His175 and Glu177. In terms of domain architecture, GMPS ATP-PPase spans Trp202 to Arg391. ATP is bound at residue Ser229 to Ser235.

Homodimer.

It carries out the reaction XMP + L-glutamine + ATP + H2O = GMP + L-glutamate + AMP + diphosphate + 2 H(+). It functions in the pathway purine metabolism; GMP biosynthesis; GMP from XMP (L-Gln route): step 1/1. In terms of biological role, catalyzes the synthesis of GMP from XMP. This chain is GMP synthase [glutamine-hydrolyzing], found in Lactobacillus acidophilus (strain ATCC 700396 / NCK56 / N2 / NCFM).